A 289-amino-acid polypeptide reads, in one-letter code: 4-hydroxybenzoate octaprenyltransferase (289 aa).

Transmembrane regions (helical) follow at residues 33 to 53, 99 to 119, 141 to 161, 163 to 183, 213 to 233, 238 to 258, and 268 to 288; these read LWAL…AVFV, LFVV…TMTI, LPQV…FAAV, ESVP…AVAY, LIIG…GRLN, EFYW…KLIV, and AFLN…MSYW.

This sequence belongs to the UbiA prenyltransferase family. Requires Mg(2+) as cofactor.

Its subcellular location is the cell inner membrane. It carries out the reaction all-trans-octaprenyl diphosphate + 4-hydroxybenzoate = 4-hydroxy-3-(all-trans-octaprenyl)benzoate + diphosphate. It participates in cofactor biosynthesis; ubiquinone biosynthesis. Functionally, catalyzes the prenylation of para-hydroxybenzoate (PHB) with an all-trans polyprenyl group. Mediates the second step in the final reaction sequence of ubiquinone-8 (UQ-8) biosynthesis, which is the condensation of the polyisoprenoid side chain with PHB, generating the first membrane-bound Q intermediate 3-octaprenyl-4-hydroxybenzoate. The sequence is that of 4-hydroxybenzoate octaprenyltransferase from Enterobacter sp. (strain 638).